We begin with the raw amino-acid sequence, 171 residues long: Tetratricopeptide repeat protein 9C (171 aa).

TPR repeat units follow at residues 8 to 41, 72 to 107, and 108 to 141; these read AQVY…LRGL, THCY…QPDN, and AKAL…QPKD.

This sequence belongs to the TTC9 family.

This is Tetratricopeptide repeat protein 9C (Ttc9c) from Mus musculus (Mouse).